The following is a 350-amino-acid chain: Mitogen-activated protein kinase HOG1 (350 aa).

In terms of domain architecture, Protein kinase spans 20–299; the sequence is YTDLQPVGMG…AAQALAHEYL (280 aa). Residues 26 to 34 and lysine 49 contribute to the ATP site; that span reads VGMGAFGLV. Aspartate 141 (proton acceptor) is an active-site residue. The TXY motif lies at 171 to 173; sequence TGY.

This sequence belongs to the protein kinase superfamily. Ser/Thr protein kinase family. MAP kinase subfamily. HOG1 sub-subfamily. The cofactor is Mg(2+).

Its subcellular location is the cytoplasm. The protein resides in the nucleus. The enzyme catalyses L-seryl-[protein] + ATP = O-phospho-L-seryl-[protein] + ADP + H(+). It catalyses the reaction L-threonyl-[protein] + ATP = O-phospho-L-threonyl-[protein] + ADP + H(+). Its function is as follows. Proline-directed serine/threonine-protein kinase involved in a signal transduction pathway that is activated by changes in the osmolarity of the extracellular environment. Controls osmotic regulation of transcription of target genes. Involved in environmental stress response. Via the downstream MSN2 transcription factor, may play roles in the regulation of growth, conidiation, trap development, fatty acid metabolism and secondary metabolites biosynthesis. The chain is Mitogen-activated protein kinase HOG1 from Arthrobotrys oligospora (strain ATCC 24927 / CBS 115.81 / DSM 1491) (Nematode-trapping fungus).